We begin with the raw amino-acid sequence, 127 residues long: Modulator protein MzrA (127 aa).

Over 1 to 10 the chain is Cytoplasmic; sequence MLKPRITARQ. The helical transmembrane segment at 11-31 threads the bilayer; it reads LIWISAFLLMLTILMMTWSTL. Residues 32 to 127 are Periplasmic-facing; that stretch reads RQQESTLAIR…RLRESSHRFG (96 aa).

This sequence belongs to the MzrA family. As to quaternary structure, interacts with EnvZ.

It localises to the cell inner membrane. Its function is as follows. Modulates the activity of the EnvZ/OmpR two-component regulatory system, probably by directly modulating EnvZ enzymatic activity and increasing stability of phosphorylated OmpR. The protein is Modulator protein MzrA of Salmonella agona (strain SL483).